Reading from the N-terminus, the 345-residue chain is Holliday junction branch migration complex subunit RuvB (345 aa).

Positions 1 to 22 (MIETDALSGGTPRRLVTQQPLS) are disordered. The tract at residues 4–193 (TDALSGGTPR…FGIVARLEFY (190 aa)) is large ATPase domain (RuvB-L). Residues L32, R33, G74, K77, T78, T79, 140-142 (EDY), R183, Y193, and R230 each bind ATP. Position 78 (T78) interacts with Mg(2+). The interval 194–264 (TPEELTRIVR…VADAALSMLD (71 aa)) is small ATPAse domain (RuvB-S). The segment at 267–345 (PAGLDVMDRK…HFGFVPPERV (79 aa)) is head domain (RuvB-H). Residues R322 and R327 each contribute to the DNA site.

Belongs to the RuvB family. In terms of assembly, homohexamer. Forms an RuvA(8)-RuvB(12)-Holliday junction (HJ) complex. HJ DNA is sandwiched between 2 RuvA tetramers; dsDNA enters through RuvA and exits via RuvB. An RuvB hexamer assembles on each DNA strand where it exits the tetramer. Each RuvB hexamer is contacted by two RuvA subunits (via domain III) on 2 adjacent RuvB subunits; this complex drives branch migration. In the full resolvosome a probable DNA-RuvA(4)-RuvB(12)-RuvC(2) complex forms which resolves the HJ.

It localises to the cytoplasm. The catalysed reaction is ATP + H2O = ADP + phosphate + H(+). Its function is as follows. The RuvA-RuvB-RuvC complex processes Holliday junction (HJ) DNA during genetic recombination and DNA repair, while the RuvA-RuvB complex plays an important role in the rescue of blocked DNA replication forks via replication fork reversal (RFR). RuvA specifically binds to HJ cruciform DNA, conferring on it an open structure. The RuvB hexamer acts as an ATP-dependent pump, pulling dsDNA into and through the RuvAB complex. RuvB forms 2 homohexamers on either side of HJ DNA bound by 1 or 2 RuvA tetramers; 4 subunits per hexamer contact DNA at a time. Coordinated motions by a converter formed by DNA-disengaged RuvB subunits stimulates ATP hydrolysis and nucleotide exchange. Immobilization of the converter enables RuvB to convert the ATP-contained energy into a lever motion, pulling 2 nucleotides of DNA out of the RuvA tetramer per ATP hydrolyzed, thus driving DNA branch migration. The RuvB motors rotate together with the DNA substrate, which together with the progressing nucleotide cycle form the mechanistic basis for DNA recombination by continuous HJ branch migration. Branch migration allows RuvC to scan DNA until it finds its consensus sequence, where it cleaves and resolves cruciform DNA. The polypeptide is Holliday junction branch migration complex subunit RuvB (Laribacter hongkongensis (strain HLHK9)).